Reading from the N-terminus, the 483-residue chain is Probable glycine dehydrogenase (decarboxylating) subunit 2 (483 aa).

Lysine 267 carries the N6-(pyridoxal phosphate)lysine modification.

The protein belongs to the GcvP family. C-terminal subunit subfamily. In terms of assembly, the glycine cleavage system is composed of four proteins: P, T, L and H. In this organism, the P 'protein' is a heterodimer of two subunits. It depends on pyridoxal 5'-phosphate as a cofactor.

It catalyses the reaction N(6)-[(R)-lipoyl]-L-lysyl-[glycine-cleavage complex H protein] + glycine + H(+) = N(6)-[(R)-S(8)-aminomethyldihydrolipoyl]-L-lysyl-[glycine-cleavage complex H protein] + CO2. Functionally, the glycine cleavage system catalyzes the degradation of glycine. The P protein binds the alpha-amino group of glycine through its pyridoxal phosphate cofactor; CO(2) is released and the remaining methylamine moiety is then transferred to the lipoamide cofactor of the H protein. This is Probable glycine dehydrogenase (decarboxylating) subunit 2 from Kosmotoga olearia (strain ATCC BAA-1733 / DSM 21960 / TBF 19.5.1).